The following is a 55-amino-acid chain: uncharacterized protein (55 aa).

Residues 1–25 are disordered; sequence MKNNDKKKEVQRKYREEIKKKKQKN. The helical transmembrane segment at 35-55 threads the bilayer; it reads TIIVVTIIVLFIFFTYTLQGF.

Its subcellular location is the membrane. This is an uncharacterized protein from Bacillus subtilis (strain 168).